A 180-amino-acid chain; its full sequence is Transcription factor HES-7.1-B (180 aa).

The region spanning 13-70 is the bHLH domain; that stretch reads HRKLLKPLVEKRRRERINNSLEKLRIFLSQTLKSEKLKNPKVEKAEILECTVQFLQSR. In terms of domain architecture, Orange spans 84–116; it reads YQSGFQHCLETTLHFMNSKPDMNGVTKELLSHQ. The WRPW motif signature appears at 176-179; it reads WRPW.

As to quaternary structure, transcription repression requires formation of a complex with a corepressor protein of the Groucho/TLE family. Expressed in the presumptive midbrain-hindbrain boundary (MHB) as early as the early gastrula stage (stage 10.5). Expression in the MHB continues through to tailbud stage. Also transiently expressed in the eye anlage at late neurula stage.

Its subcellular location is the nucleus. Transcriptional repressor. Represses transcription from both N box- and E box-containing promoters. Demarcates the prospective midbrain-hindbrain boundary (MHB) region in the neuroectoderm in early gastrulae embryos by repressing transcription of a number of target genes. This chain is Transcription factor HES-7.1-B (hes7.1-b), found in Xenopus laevis (African clawed frog).